Here is a 185-residue protein sequence, read N- to C-terminus: Probable chorismate pyruvate-lyase 1 (185 aa).

3 residues coordinate substrate: Arg68, Leu106, and Glu164.

This sequence belongs to the UbiC family.

The protein resides in the cytoplasm. The catalysed reaction is chorismate = 4-hydroxybenzoate + pyruvate. It functions in the pathway cofactor biosynthesis; ubiquinone biosynthesis. In terms of biological role, removes the pyruvyl group from chorismate, with concomitant aromatization of the ring, to provide 4-hydroxybenzoate (4HB) for the ubiquinone pathway. This is Probable chorismate pyruvate-lyase 1 from Pseudomonas entomophila (strain L48).